Here is a 387-residue protein sequence, read N- to C-terminus: Ferrochelatase (387 aa).

Residues H196 and E277 each coordinate Fe cation.

This sequence belongs to the ferrochelatase family.

It localises to the cytoplasm. The catalysed reaction is heme b + 2 H(+) = protoporphyrin IX + Fe(2+). It participates in porphyrin-containing compound metabolism; protoheme biosynthesis; protoheme from protoporphyrin-IX: step 1/1. Functionally, catalyzes the ferrous insertion into protoporphyrin IX. The chain is Ferrochelatase from Synechococcus elongatus (strain ATCC 33912 / PCC 7942 / FACHB-805) (Anacystis nidulans R2).